A 550-amino-acid polypeptide reads, in one-letter code: Chaperonin GroEL (550 aa).

Residues 30–33 (TLGP), Lys51, 87–91 (DGTTT), Gly415, and Asp497 each bind ATP.

It belongs to the chaperonin (HSP60) family. As to quaternary structure, forms a cylinder of 14 subunits composed of two heptameric rings stacked back-to-back. Interacts with the co-chaperonin GroES.

The protein resides in the cytoplasm. The catalysed reaction is ATP + H2O + a folded polypeptide = ADP + phosphate + an unfolded polypeptide.. Together with its co-chaperonin GroES, plays an essential role in assisting protein folding. The GroEL-GroES system forms a nano-cage that allows encapsulation of the non-native substrate proteins and provides a physical environment optimized to promote and accelerate protein folding. This chain is Chaperonin GroEL, found in Yersinia enterocolitica.